The chain runs to 422 residues: Transcription termination factor Rho (422 aa).

In terms of domain architecture, Rho RNA-BD spans 52–127; that stretch reads EVGGDGVLEV…TRVTKINFDD (76 aa). Residues 173-178, 185-190, and R216 each bind ATP; these read GKGQRG and RTGKTV.

This sequence belongs to the Rho family. In terms of assembly, homohexamer. The homohexamer assembles into an open ring structure.

Facilitates transcription termination by a mechanism that involves Rho binding to the nascent RNA, activation of Rho's RNA-dependent ATPase activity, and release of the mRNA from the DNA template. The protein is Transcription termination factor Rho of Cereibacter sphaeroides (strain ATCC 17023 / DSM 158 / JCM 6121 / CCUG 31486 / LMG 2827 / NBRC 12203 / NCIMB 8253 / ATH 2.4.1.) (Rhodobacter sphaeroides).